We begin with the raw amino-acid sequence, 471 residues long: ATP synthase subunit beta (471 aa).

An ATP-binding site is contributed by 153 to 160; it reads GGAGVGKT.

It belongs to the ATPase alpha/beta chains family. In terms of assembly, F-type ATPases have 2 components, CF(1) - the catalytic core - and CF(0) - the membrane proton channel. CF(1) has five subunits: alpha(3), beta(3), gamma(1), delta(1), epsilon(1). CF(0) has four main subunits: a(1), b(1), b'(1) and c(9-12).

The protein localises to the cell membrane. The catalysed reaction is ATP + H2O + 4 H(+)(in) = ADP + phosphate + 5 H(+)(out). Produces ATP from ADP in the presence of a proton gradient across the membrane. The catalytic sites are hosted primarily by the beta subunits. The protein is ATP synthase subunit beta of Roseiflexus sp. (strain RS-1).